The following is a 78-amino-acid chain: Toxin BmTxKS4 (78 aa).

The first 21 residues, 1–21 (MKLKISFLILVLFSVFFAIEG), serve as a signal peptide directing secretion. Residues 22 to 32 (IIKWFPASVNG) constitute a propeptide that is removed on maturation.

Contains 3 disulfide bonds. In terms of tissue distribution, expressed by the venom gland.

The protein resides in the secreted. In terms of biological role, reversibly inhibits potassium channels. The chain is Toxin BmTxKS4 from Olivierus martensii (Manchurian scorpion).